The chain runs to 351 residues: Small ribosomal subunit biogenesis GTPase RsgA (351 aa).

Positions 107 to 277 (ENLLQRPDNF…LIDSPGIREF (171 aa)) constitute a CP-type G domain. GTP is bound by residues 163–166 (NKTD) and 219–227 (GQSGVGKSS). Cys301, Cys306, His308, and Cys314 together coordinate Zn(2+).

The protein belongs to the TRAFAC class YlqF/YawG GTPase family. RsgA subfamily. As to quaternary structure, monomer. Associates with 30S ribosomal subunit, binds 16S rRNA. It depends on Zn(2+) as a cofactor.

It is found in the cytoplasm. One of several proteins that assist in the late maturation steps of the functional core of the 30S ribosomal subunit. Helps release RbfA from mature subunits. May play a role in the assembly of ribosomal proteins into the subunit. Circularly permuted GTPase that catalyzes slow GTP hydrolysis, GTPase activity is stimulated by the 30S ribosomal subunit. The chain is Small ribosomal subunit biogenesis GTPase RsgA from Marinobacter nauticus (strain ATCC 700491 / DSM 11845 / VT8) (Marinobacter aquaeolei).